The primary structure comprises 396 residues: Adenosine 3'-phospho 5'-phosphosulfate transporter 2 (396 aa).

A disordered region spans residues 22-42; the sequence is NGGESAGNSPPSQRKSSTSES. Over residues 27–42 the composition is skewed to polar residues; it reads AGNSPPSQRKSSTSES. Phosphoserine occurs at positions 37 and 40. Residue asparagine 57 is glycosylated (N-linked (GlcNAc...) asparagine). A run of 10 helical transmembrane segments spans residues 66 to 86, 91 to 111, 140 to 160, 163 to 183, 189 to 209, 216 to 236, 253 to 273, 290 to 310, 318 to 338, and 342 to 362; these read CAGV…IFTV, PYGW…GLVE, LILA…LGYL, PTQV…SILI, GLLD…FTLA, NFNL…AAIG, VVFY…LVTG, FGYG…VLAL, IAAT…FVLF, and FTLQ…LNVY.

This sequence belongs to the nucleotide-sugar transporter family. SLC35B subfamily.

Its subcellular location is the golgi apparatus membrane. In terms of biological role, mediates the transport of adenosine 3'-phospho 5'-phosphosulfate (PAPS), from cytosol into Golgi. PAPS is a universal sulfuryl donor for sulfation events that take place in the Golgi. Essential for viability. Involved in glycosaminoglycan synthesis and the subsequent signaling. May be involved in hh and dpp signaling by controlling the sulfation of heparan sulfate (HS). The chain is Adenosine 3'-phospho 5'-phosphosulfate transporter 2 (Papst2) from Drosophila melanogaster (Fruit fly).